The following is a 53-amino-acid chain: uncharacterized protein (53 aa).

This sequence belongs to the ELIP/psbS family.

Its subcellular location is the plastid. It localises to the chloroplast. Functionally, possible role in chlorophyll and/or carotenoid binding. This is an uncharacterized protein from Guillardia theta (Cryptophyte).